The sequence spans 344 residues: Arginine N-succinyltransferase (344 aa).

L125 contacts succinyl-CoA. The active-site Proton donor is H229.

The protein belongs to the arginine N-succinyltransferase family.

It carries out the reaction succinyl-CoA + L-arginine = N(2)-succinyl-L-arginine + CoA + H(+). The protein operates within amino-acid degradation; L-arginine degradation via AST pathway; L-glutamate and succinate from L-arginine: step 1/5. Catalyzes the transfer of succinyl-CoA to arginine to produce N(2)-succinylarginine. The chain is Arginine N-succinyltransferase from Shigella boydii serotype 4 (strain Sb227).